We begin with the raw amino-acid sequence, 612 residues long: Dihydroxy-acid dehydratase (612 aa).

Aspartate 81 serves as a coordination point for Mg(2+). Cysteine 122 lines the [2Fe-2S] cluster pocket. 2 residues coordinate Mg(2+): aspartate 123 and lysine 124. An N6-carboxylysine modification is found at lysine 124. [2Fe-2S] cluster is bound at residue cysteine 193. Glutamate 489 provides a ligand contact to Mg(2+). Serine 515 functions as the Proton acceptor in the catalytic mechanism.

It belongs to the IlvD/Edd family. In terms of assembly, homodimer. It depends on [2Fe-2S] cluster as a cofactor. Requires Mg(2+) as cofactor.

It catalyses the reaction (2R)-2,3-dihydroxy-3-methylbutanoate = 3-methyl-2-oxobutanoate + H2O. It carries out the reaction (2R,3R)-2,3-dihydroxy-3-methylpentanoate = (S)-3-methyl-2-oxopentanoate + H2O. It participates in amino-acid biosynthesis; L-isoleucine biosynthesis; L-isoleucine from 2-oxobutanoate: step 3/4. It functions in the pathway amino-acid biosynthesis; L-valine biosynthesis; L-valine from pyruvate: step 3/4. Functions in the biosynthesis of branched-chain amino acids. Catalyzes the dehydration of (2R,3R)-2,3-dihydroxy-3-methylpentanoate (2,3-dihydroxy-3-methylvalerate) into 2-oxo-3-methylpentanoate (2-oxo-3-methylvalerate) and of (2R)-2,3-dihydroxy-3-methylbutanoate (2,3-dihydroxyisovalerate) into 2-oxo-3-methylbutanoate (2-oxoisovalerate), the penultimate precursor to L-isoleucine and L-valine, respectively. This Azotobacter vinelandii (strain DJ / ATCC BAA-1303) protein is Dihydroxy-acid dehydratase.